The following is a 474-amino-acid chain: MSAKTLYDKLWDSHVVREEEDGTALIYIDRQLLHEVTSPQAFEGLRLANRKPWRIDANLATPDHNVPTTAFNSVEDIVDPISRIQVQTLDANTKQFGITEFGIGDVRQGIVHVVGPEEGVTLPGMTLVCGDSHTATHGALGALAHGVGTSEVEHVLATQCLIQKKMKNMLVKVDGKLQPGVSPKDVVLAIIGQIGTAGGNGHAIEFGGQVFRDMSIEGRMTVCNMAIEAGARVGLVAVDEKTVEYVKGRPFAPKAEDWDAAVAAWQDLKSDDNAHFDKVVEMDGSKIEPQVSWGTSPEMVSDVNGKVPNPAHESDDVKAGGIRRALEYMGLEADMAITDIPVDYVFIGSCTNSRIEDFREAAAVLKGRKVASSVEQALVVPGSGLVKRQAEEEGLDKIFIEAGFEWRNPGCSMCLAMNADRLPSGKHCASTSNRNFEGRQGAGGRTHLVSPQMAAAAAVAGHFVDVRDMMKEAS.

[4Fe-4S] cluster is bound by residues cysteine 350, cysteine 411, and cysteine 414.

This sequence belongs to the aconitase/IPM isomerase family. LeuC type 1 subfamily. As to quaternary structure, heterodimer of LeuC and LeuD. [4Fe-4S] cluster serves as cofactor.

The enzyme catalyses (2R,3S)-3-isopropylmalate = (2S)-2-isopropylmalate. Its pathway is amino-acid biosynthesis; L-leucine biosynthesis; L-leucine from 3-methyl-2-oxobutanoate: step 2/4. Functionally, catalyzes the isomerization between 2-isopropylmalate and 3-isopropylmalate, via the formation of 2-isopropylmaleate. The protein is 3-isopropylmalate dehydratase large subunit of Hydrogenovibrio crunogenus (strain DSM 25203 / XCL-2) (Thiomicrospira crunogena).